The primary structure comprises 343 residues: Ribosomal RNA small subunit methyltransferase C (343 aa).

Belongs to the methyltransferase superfamily. RsmC family. Monomer.

It is found in the cytoplasm. It carries out the reaction guanosine(1207) in 16S rRNA + S-adenosyl-L-methionine = N(2)-methylguanosine(1207) in 16S rRNA + S-adenosyl-L-homocysteine + H(+). In terms of biological role, specifically methylates the guanine in position 1207 of 16S rRNA in the 30S particle. This Escherichia coli O8 (strain IAI1) protein is Ribosomal RNA small subunit methyltransferase C.